A 51-amino-acid polypeptide reads, in one-letter code: Ovomucoid (51 aa).

A Kazal-like domain is found at 3 to 51 (VDCSGYPKPACTLEYFPLCGSDNQTYANKCAFCNAVVEKNVTLRHLGKC). Disulfide bonds link Cys5–Cys35, Cys13–Cys32, and Cys21–Cys51. Asn42 is a glycosylation site (N-linked (GlcNAc...) asparagine).

The protein resides in the secreted. The protein is Ovomucoid of Nothoprocta cinerascens (Brushland tinamou).